The primary structure comprises 872 residues: Chaperone protein ClpB 2 (872 aa).

The region spanning 6–148 (PNQFTEKAWE…KNIIKQVRGS (143 aa)) is the Clp R domain. Repeat regions lie at residues 9–73 (FTEK…IQRQ) and 85–148 (LGRS…VRGS). The segment at 161-342 (QSLEKYGRDL…RRFQQVYVDQ (182 aa)) is NBD1. Residue 208–215 (GEPGVGKT) coordinates ATP. The linker stretch occupies residues 343-551 (PSVEDTISIL…IAEIISKWTG (209 aa)). Residues 393–527 (IDLVDEAAAR…TERELSQTQG (135 aa)) adopt a coiled-coil conformation. The segment at 561-772 (EKEKLLHLED…RIDEVIIFHS (212 aa)) is NBD2. 611–618 (GPTGVGKT) serves as a coordination point for ATP. The C-terminal stretch occupies residues 773–872 (LDKKELRQIV…SRLPVEVFSS (100 aa)).

It belongs to the ClpA/ClpB family. Homohexamer. The oligomerization is ATP-dependent.

It localises to the cytoplasm. Its function is as follows. Part of a stress-induced multi-chaperone system, it is involved in the recovery of the cell from heat-induced damage, in cooperation with DnaK, DnaJ and GrpE. Acts before DnaK, in the processing of protein aggregates. Protein binding stimulates the ATPase activity; ATP hydrolysis unfolds the denatured protein aggregates, which probably helps expose new hydrophobic binding sites on the surface of ClpB-bound aggregates, contributing to the solubilization and refolding of denatured protein aggregates by DnaK. The polypeptide is Chaperone protein ClpB 2 (clpB2) (Nostoc sp. (strain PCC 7120 / SAG 25.82 / UTEX 2576)).